Here is a 213-residue protein sequence, read N- to C-terminus: Probable transaldolase (213 aa).

The active-site Schiff-base intermediate with substrate is lysine 83.

This sequence belongs to the transaldolase family. Type 3B subfamily.

It is found in the cytoplasm. It catalyses the reaction D-sedoheptulose 7-phosphate + D-glyceraldehyde 3-phosphate = D-erythrose 4-phosphate + beta-D-fructose 6-phosphate. Its pathway is carbohydrate degradation; pentose phosphate pathway; D-glyceraldehyde 3-phosphate and beta-D-fructose 6-phosphate from D-ribose 5-phosphate and D-xylulose 5-phosphate (non-oxidative stage): step 2/3. Functionally, transaldolase is important for the balance of metabolites in the pentose-phosphate pathway. This is Probable transaldolase from Oceanobacillus iheyensis (strain DSM 14371 / CIP 107618 / JCM 11309 / KCTC 3954 / HTE831).